Consider the following 349-residue polypeptide: 4-hydroxythreonine-4-phosphate dehydrogenase (349 aa).

Substrate is bound by residues histidine 141 and threonine 142. A divalent metal cation is bound by residues histidine 176, histidine 221, and histidine 276. Lysine 284, asparagine 293, and arginine 302 together coordinate substrate.

This sequence belongs to the PdxA family. As to quaternary structure, homodimer. Requires Zn(2+) as cofactor. Mg(2+) is required as a cofactor. The cofactor is Co(2+).

It localises to the cytoplasm. It carries out the reaction 4-(phosphooxy)-L-threonine + NAD(+) = 3-amino-2-oxopropyl phosphate + CO2 + NADH. It functions in the pathway cofactor biosynthesis; pyridoxine 5'-phosphate biosynthesis; pyridoxine 5'-phosphate from D-erythrose 4-phosphate: step 4/5. Functionally, catalyzes the NAD(P)-dependent oxidation of 4-(phosphooxy)-L-threonine (HTP) into 2-amino-3-oxo-4-(phosphooxy)butyric acid which spontaneously decarboxylates to form 3-amino-2-oxopropyl phosphate (AHAP). The polypeptide is 4-hydroxythreonine-4-phosphate dehydrogenase (Methylorubrum extorquens (strain PA1) (Methylobacterium extorquens)).